Here is a 218-residue protein sequence, read N- to C-terminus: tRNA (guanine-N(7)-)-methyltransferase (218 aa).

A disordered region spans residues 1–26; sequence MRLKNKPWANELVEEHPESALDRPDP. Basic and acidic residues predominate over residues 13–26; that stretch reads VEEHPESALDRPDP. Positions 45, 70, 97, and 119 each coordinate S-adenosyl-L-methionine. Residue D119 is part of the active site. K123 contacts substrate. The interval 125-130 is interaction with RNA; that stretch reads RHEKRR. Substrate-binding positions include D155 and 195 to 198; that span reads TEYE.

It belongs to the class I-like SAM-binding methyltransferase superfamily. TrmB family.

It carries out the reaction guanosine(46) in tRNA + S-adenosyl-L-methionine = N(7)-methylguanosine(46) in tRNA + S-adenosyl-L-homocysteine. Its pathway is tRNA modification; N(7)-methylguanine-tRNA biosynthesis. In terms of biological role, catalyzes the formation of N(7)-methylguanine at position 46 (m7G46) in tRNA. The sequence is that of tRNA (guanine-N(7)-)-methyltransferase from Lactobacillus delbrueckii subsp. bulgaricus (strain ATCC 11842 / DSM 20081 / BCRC 10696 / JCM 1002 / NBRC 13953 / NCIMB 11778 / NCTC 12712 / WDCM 00102 / Lb 14).